The chain runs to 148 residues: Receptor activity-modifying protein 1 (148 aa).

The N-terminal stretch at 1 to 26 (MAPGLRGLPRCGLWLLLAHHLFMVTA) is a signal peptide. Intrachain disulfides connect cysteine 27–cysteine 82, cysteine 40–cysteine 72, and cysteine 57–cysteine 104. Over 27–118 (CRDPDYGTLI…RALRDPPNSI (92 aa)) the chain is Extracellular. A helical membrane pass occupies residues 119-140 (LCPFIALPITVTLLMTALVVWR). Over 141 to 148 (SKRTEGIV) the chain is Cytoplasmic.

It belongs to the RAMP family. As to quaternary structure, heterodimer of CALCRL and RAMP1; the interaction induces allosteric modulation of CALCRL function and CGRP1/CALCA and CGRP2/CALCB ligand specificity. Heterodimer of CALCR and RAMP1; interaction forms the AMYR1 receptor complex for amylin/IAPP and CGRP1/CALCA ligands. As to expression, expressed predominantly in the thymus, skeletal muscle, embryonic and adult brain, embryonic and adult lung, and colon.

The protein resides in the cell membrane. Its function is as follows. Accessory protein that interacts with and modulates the function of G-protein coupled receptors including calcitonin gene-related peptide type 1 receptor (CALCRL) and calcitonin receptor (CALCR). Required for the transport of CALCRL to the plasma membrane. Together with CALCRL, form the receptor complex for the calcitonin gene-related peptides CGRP1/CALCA and CGRP2/CALCB. Together with CALCR, form the AMYR1 receptor complex for amylin/IAPP and CGRP1/CALCA. In Mus musculus (Mouse), this protein is Receptor activity-modifying protein 1.